A 433-amino-acid chain; its full sequence is tRNA-2-methylthio-N(6)-dimethylallyladenosine synthase (433 aa).

Residues 3–118 (KRLYIETLGC…IRDVIKQEKA (116 aa)) enclose the MTTase N-terminal domain. Residues C12, C49, C81, C150, C154, and C157 each coordinate [4Fe-4S] cluster. The Radical SAM core domain maps to 136 to 371 (RTSPYKAFIN…LHLQMLDSIS (236 aa)). One can recognise a TRAM domain in the interval 372 to 433 (EQEKDKVYEV…RLSLEGELVG (62 aa)).

The protein belongs to the methylthiotransferase family. MiaB subfamily. Monomer. The cofactor is [4Fe-4S] cluster.

The protein localises to the cytoplasm. It catalyses the reaction N(6)-dimethylallyladenosine(37) in tRNA + (sulfur carrier)-SH + AH2 + 2 S-adenosyl-L-methionine = 2-methylsulfanyl-N(6)-dimethylallyladenosine(37) in tRNA + (sulfur carrier)-H + 5'-deoxyadenosine + L-methionine + A + S-adenosyl-L-homocysteine + 2 H(+). Catalyzes the methylthiolation of N6-(dimethylallyl)adenosine (i(6)A), leading to the formation of 2-methylthio-N6-(dimethylallyl)adenosine (ms(2)i(6)A) at position 37 in tRNAs that read codons beginning with uridine. In Nitratiruptor sp. (strain SB155-2), this protein is tRNA-2-methylthio-N(6)-dimethylallyladenosine synthase.